Here is a 229-residue protein sequence, read N- to C-terminus: Lytic polysaccharide monooxygenase-like protein ham-7 (229 aa).

A signal peptide spans 1–17 (MLTSTLLALASAALASA). Residue His-18 participates in Cu(2+) binding. Intrachain disulfides connect Cys-47–Cys-157 and Cys-122–Cys-178. N-linked (GlcNAc...) asparagine glycans are attached at residues Asn-55, Asn-98, Asn-139, Asn-174, and Asn-180. Residue Ser-206 is the site of GPI-anchor amidated serine attachment. Positions 207–229 (AAASLARMAGWVPLVAGGLWLML) are cleaved as a propeptide — removed in mature form.

The protein belongs to the X325 family. It depends on Cu(2+) as a cofactor.

It localises to the cell membrane. Its function is as follows. Lytic polysaccharide monooxygenase-like protein that has diverged to biological functions other than polysaccharide degradation since it does not perform oxidative cleavage of polysaccharides. Acts as the major cell wall sensor that regulates MAK-1-dependent hyphal anastomosis, the fusion of hyphal cells. May also act as a cell surface-bound protein that functions in the copper-accumulation pathway. The chain is Lytic polysaccharide monooxygenase-like protein ham-7 from Neurospora crassa (strain ATCC 24698 / 74-OR23-1A / CBS 708.71 / DSM 1257 / FGSC 987).